The primary structure comprises 649 residues: Microtubule-associated protein VP6 (649 aa).

The protein localises to the virion. It localises to the host cytoplasm. The protein resides in the host cytoskeleton. In terms of biological role, minor inner capsid component. Displays NTPase and RNA 5'-triphosphatase (RTPase) activities. May function as a cofactor of polymerase VP2. Associates with microtubules and plays a role in the formation, structural organization and morphology of viral inclusions, where the assembly of cores and the replication of viral RNA occur. This chain is Microtubule-associated protein VP6 (S6), found in Cryphonectria parasitica (Chestnut blight fungus).